Here is an 88-residue protein sequence, read N- to C-terminus: Phosphocarrier protein HPr (88 aa).

The HPr domain maps to 1–88 (MEQASFVVID…EVLKKEGLAE (88 aa)). Histidine 15 functions as the Pros-phosphohistidine intermediate in the catalytic mechanism. At serine 46 the chain carries Phosphoserine; by HPrK/P.

The protein belongs to the HPr family.

It localises to the cytoplasm. With respect to regulation, phosphorylation on Ser-46 inhibits the phosphoryl transfer from enzyme I to HPr. In terms of biological role, general (non sugar-specific) component of the phosphoenolpyruvate-dependent sugar phosphotransferase system (sugar PTS). This major carbohydrate active-transport system catalyzes the phosphorylation of incoming sugar substrates concomitantly with their translocation across the cell membrane. The phosphoryl group from phosphoenolpyruvate (PEP) is transferred to the phosphoryl carrier protein HPr by enzyme I. Phospho-HPr then transfers it to the PTS EIIA domain. P-Ser-HPr interacts with the catabolite control protein A (CcpA), forming a complex that binds to DNA at the catabolite response elements cre, operator sites preceding a large number of catabolite-regulated genes. Thus, P-Ser-HPr is a corepressor in carbon catabolite repression (CCR), a mechanism that allows bacteria to coordinate and optimize the utilization of available carbon sources. P-Ser-HPr also plays a role in inducer exclusion, in which it probably interacts with several non-PTS permeases and inhibits their transport activity. In Listeria monocytogenes serovar 1/2a (strain ATCC BAA-679 / EGD-e), this protein is Phosphocarrier protein HPr (ptsH).